The primary structure comprises 1788 residues: Genome polyprotein (1788 aa).

Residues 1 to 184 (MMMASKDVVA…LCPLPPIDLR (184 aa)) form an interaction with host MAP1LC3A/LC3 region. Residues 58–68 (GRTTPEPTGTA) show a composition bias toward low complexity. Residues 58-86 (GRTTPEPTGTAGPPPKQQRDRPPRTQEEV) are disordered. The segment covering 74–84 (QQRDRPPRTQE) has biased composition (basic and acidic residues). Residues 185-399 (NMEPASEPTI…ASLLPDFHLQ (215 aa)) are interaction with NTPase. Residues 302–399 (HPTQSWSQQT…ASLLPDFHLQ (98 aa)) are interaction with NS4. 2 host ER membrane association regions span residues 319–350 (KLELVRDAILAAVNGLVSQPFKNFLGKLKPLN) and 361–399 (TFMGVVEMVILLLELFGVFWNPPDVSNFIASLLPDFHLQ). Positions 400–575 (GPEDLARDLV…GKTKAAEHLA (176 aa)) are interaction with NS1-2 and NS4 and homooligomerization. The region spanning 533–698 (RISMARSALA…EQIRRVSPGD (166 aa)) is the SF3 helicase domain. 561 to 568 (GPPGIGKT) serves as a coordination point for ATP. An important for mitochondrion targeting region spans residues 652-757 (AIVITTNAPG…AVALTMERQD (106 aa)). Residues 827 to 833 (YSLESDG) are functions as endoplasmic reticulum export signal. The segment at 866–911 (RAVAYASCIQSAITSILQIAGSALVVNRAVKRMFGTRTATLSLEGP) is host membrane association. The interval 948–979 (EEVAHTEIPSATMEGKNKGKNKKGRGRRNNYN) is disordered. A compositionally biased stretch (basic residues) spans 965 to 975 (KGKNKKGRGRR). An acidic region spans residues 988–993 (DEEYEE). The residue at position 991 (Y991) is an O-(5'-phospho-RNA)-tyrosine. The interaction with host EIF4G stretch occupies residues 1083–1099 (WADDEREVDYNEKISFE). The Peptidase C37 domain occupies 1100-1280 (APPTLWSRVT…QASEGETTLE (181 aa)). Active-site for 3CLpro activity residues include H1129, E1153, and C1238. One can recognise a RdRp catalytic domain in the interval 1515 to 1636 (KYHFDADYTA…STDIEFDPAK (122 aa)). Mg(2+) is bound by residues D1519, D1521, D1623, and E1624.

As to quaternary structure, homodimer. Homooligomer. Interacts with NTPase; this interaction increases the proapoptotic activity of the NTPase and is crucial for the formation of the viral replication complex. Interacts with NS4; this interaction is crucial for the formation of the viral replication complex. Interacts (via N-terminus) with host VAPA. Interacts with host MAP1LC3A/LC3; this interaction does not seem to be linked to host autophagy, but rather plays a role in the formation of viral factories. In terms of assembly, homooligomer. Interacts with NS1-2; this interaction increases the proapoptotic activity of the NTPase and is crucial for the formation of the viral replication complex. Interacts with NS4; this interaction increases the proapoptotic activity of the NTPase. Homodimer. Monomer; in solution. As to quaternary structure, interacts with NTPase; this interaction increases the proapoptotic activity of the NTPase. Interacts with NS1-2; this interaction is crucial for the formation of the viral replication complex. In terms of assembly, monomer. Interacts with the RNA-directed RNA polymerase; this interaction induces the multimerization of the RdRp and enhances its activity. Interacts with host IEF4G1; this interaction plays a role in translation of viral proteins. Homohexamer; also forms fibrous hexameric oligomer. Interacts with the viral genome-linked protein; this interaction induces the multimerization of the RdRp and enhances its activity. Mg(2+) is required as a cofactor. Mn(2+) serves as cofactor. In terms of processing, specific enzymatic cleavages in vivo yield mature proteins. 3CLpro is first autocatalytically cleaved, then processes the whole polyprotein. NS1/2-3 and NS3-4 sites are cleaved rapidly and NS4-5, NS5-6, and NS6-7 sites are processed subsequently and less efficiently. VPg is uridylylated by the polymerase and is covalently attached to the 5'-end of the polyadenylated genomic and subgenomic RNAs. This uridylylated form acts as a nucleotide-peptide primer for the polymerase.

The protein resides in the host Golgi apparatus membrane. Its subcellular location is the host endoplasmic reticulum membrane. The catalysed reaction is a ribonucleoside 5'-triphosphate + H2O = a ribonucleoside 5'-diphosphate + phosphate + H(+). It carries out the reaction Endopeptidase with a preference for cleavage when the P1 position is occupied by Glu-|-Xaa and the P1' position is occupied by Gly-|-Yaa.. It catalyses the reaction RNA(n) + a ribonucleoside 5'-triphosphate = RNA(n+1) + diphosphate. Functionally, induces the proliferation of the host smooth ER membranes forming long tubular structures. These remodeled membranes probably form the viral factories that contain the replication complex. May play a role in viral replication by interacting with host VAPA, a vesicle-associated membrane protein that plays a role in SNARE-mediated vesicle fusion. This interaction may target replication complex to intracellular membranes. In terms of biological role, displays NTPase activity, but no helicase activity. Induces the formation of convoluted membranes derived from the host ER. These remodeled membranes probably form the viral factories that contain the replication complex. Initiates host cell death by targeting the mitochondrial outer membrane, leading to the permeabilization of mitochondria, programmed host cell death and viral egress. Probably plays a role in preventing the assembly of host stress granules. Probable key protein responsible for the formation of membrane alterations by the virus. Induces the formation of convoluted membranes derived from the host ER. These remodeled membranes probably form the viral factories that contain the replication complex. May play a role in targeting replication complex to intracellular membranes. Its function is as follows. Viral genome-linked protein is covalently linked to the 5'-end of the positive-strand, negative-strand genomic RNAs and subgenomic RNA. Acts as a genome-linked replication primer. May recruit ribosome to viral RNA thereby promoting viral proteins translation. Interacts with host translation initiation complex to allow the translation of viral proteins. Induces the formation of aggregates of RNA-directed RNA polymerase in the presence of RNA. Through its interaction with the viral RNA-directed RNA polymerase, plays a crucial role in enhancing the polymerase activity. Functionally, processes the polyprotein. 3CLpro-RdRp is first released by autocleavage, then all other proteins are cleaved. May cleave polyadenylate-binding protein thereby inhibiting cellular translation. In terms of biological role, replicates genomic and antigenomic RNA by recognizing replications specific signals. Also transcribes a subgenomic mRNA by initiating RNA synthesis internally on antigenomic RNA. This sgRNA codes for structural proteins. Catalyzes the covalent attachment VPg with viral RNAs. In Southampton virus (strain GI/Human/United Kingdom/Southampton/1991) (SHV), this protein is Genome polyprotein.